The chain runs to 53 residues: Zinc metalloproteinase-disintegrin-like alborhagin (53 aa).

The protein belongs to the venom metalloproteinase (M12B) family. P-III subfamily. P-IIIb sub-subfamily. Monomer. It depends on Zn(2+) as a cofactor. Post-translationally, contains numerous disulfide bonds. Glycosylated. Expressed by the venom gland.

It localises to the secreted. Its activity is regulated as follows. Alborhagin-induced platelet aggregation, but not shape change, is inhibited by EDTA, suggesting that the platelet activation (shape change) is independent of divalent cation or metalloproteinase activity. Its function is as follows. Induces platelet activation and glycoprotein VI (GP6)-dependent platelet aggregation. Induces ectodomain cleavage of GP6 by activating endogenous platelet metalloproteinases (probably ADAM10). Has fibrinogenolytic activity against the alpha chain of fibrinogen (FGA). Recognizes distinct binding sites as convulxin, since alborhagin has minimal effect on convulxin binding to GPVI-expressing cells. Functionally, disintegrin alborhagin-C: 42 kDa fragment of alborhagin autoproteolysed that does not show platelet activation. This chain is Zinc metalloproteinase-disintegrin-like alborhagin, found in Trimeresurus albolabris (White-lipped pit viper).